The following is a 48-amino-acid chain: 4-carboxymuconolactone decarboxylase (48 aa).

This sequence belongs to the carboxymuconolactone decarboxylase family.

It carries out the reaction (R)-2-(carboxymethyl)-5-oxo-2,5-dihydro-2-furoate + H(+) = (4,5-dihydro-5-oxofuran-2-yl)-acetate + CO2. The protein operates within aromatic compound metabolism; beta-ketoadipate pathway; 5-oxo-4,5-dihydro-2-furylacetate from 3-carboxy-cis,cis-muconate: step 2/2. The sequence is that of 4-carboxymuconolactone decarboxylase from Pseudomonas putida (Arthrobacter siderocapsulatus).